Here is a 539-residue protein sequence, read N- to C-terminus: F-box/WD-40 repeat-containing protein At5g21040 (539 aa).

One can recognise an F-box domain in the interval 65 to 111; sequence STTIIDLPQALISEILNCLDPKELGLVSCVSTYLHRLASEHHAWKEF. WD repeat units follow at residues 160–199, 201–239, 255–292, 294–330, 334–373, 382–419, and 433–477; these read GHTE…SIAA, KPLG…RNLF, GHEG…CVKT, RHSD…PLAI, AHEG…SETS, PHTS…KTNR, and PPQR…EIER. The disordered stretch occupies residues 505 to 539; that stretch reads GRPDQCSIAAHKNPINGERNRAWHSKRRASGKAKA. Over residues 526-539 the composition is skewed to basic residues; the sequence is AWHSKRRASGKAKA.

The chain is F-box/WD-40 repeat-containing protein At5g21040 from Arabidopsis thaliana (Mouse-ear cress).